We begin with the raw amino-acid sequence, 144 residues long: Large ribosomal subunit protein uL15 (144 aa).

A disordered region spans residues 1 to 49 (MRLNTLSPAAGAKSAAKRVGRGIGSGTGKTCGRGHKGQKSRSGGGVRVG). Positions 21 to 31 (RGIGSGTGKTC) are enriched in gly residues.

It belongs to the universal ribosomal protein uL15 family. As to quaternary structure, part of the 50S ribosomal subunit.

Binds to the 23S rRNA. The sequence is that of Large ribosomal subunit protein uL15 from Shewanella halifaxensis (strain HAW-EB4).